Here is a 1314-residue protein sequence, read N- to C-terminus: MASKGAGVPLSRKSYRLTSETERPRVTGIVHEKLLNDYLHRIFSSPDHATPTATSRKPLNFQNLPEHLDQLLQVDSEDEESQGQVEGRLGPSTVVLDHTGGFEGLLLVDDDLLGVIGHSNFGTIRSTTCVYKGKWVYEVLISSQGLMQIGWCTINCRFNQEEGVGDTHNSYAYDGNRVRKWNVTTTNYGKAWAAGDIVSCLIDLDDGTLSFCLNGVSLGTAFENLSRGLGMAYFPAISLSFKESVAFNFGSRPLRYPVAGYRPLQDPPCADLTRAQRLLGCFRAVLSVELDPMEGRLVEKESSEWQLQGQPTVLLTLAHIFHRFAPLLHQVYLVEAVLMSFLLGIVEKATPAQAQSAVHQILDLLWLFMEDYEVQDCLKQLMMSLLRLYRFSPIVPDLGLQIHYLRLTIAILRHQKSRKFLLSNVLFDVLRSVVFFYIKSPLRVEEAGLQELIPTTWWPHRSSREGKDSAEDRAEAAEERPRRRAYERGCQRLKKRIEVVEALQVQILKLLLDNKDDNGGEASRYIFLTKFRKFLQENASGRGNMPMLCPPEYMVCFLHRLISALRYYWDEYKASNPRASCSEEAYIPPQVFYNGKVDYFDLQRLGGLLSHLRKTLKDDLASKANIVIDPLELQATTMDDLDEDEEPAPAAAQRPVQALAVGGALPLPRPGWLSSPTLGRANRFLSTAAVSLMTPRRPLSTSEKVKVRTLSVEQRTREDIEGSHWNEGLLLGRPPEEPEQPLTENSLLEVLDGAIMMYNLSVHQQLGKMVGVSDDVNEYATALRDTEDKIRRCPKRRKDILAELTKSQKVFSEKLDHLSRRLAWVHATVYSQEKMLDIYWLLRVCLRTIEHGDRTGSLFAFMPEFYLSVAINSYSALKNYFGPVHSMEELPGYEETLTRLAAILAKHFADTRIVGTDIRDSLMQALASYVCYPHSLRAVERIPEEQRVAMVRSLLAPYEQRPWAQTNWILVRLWRGCGFGYRYTRLPHLLKTKPEDASLPSLQKPCPSTLLQQHMADLLRQGPDVAPSFLNSVLNQLNWAFSEFIGMIQEIQQAAERLERNFVDSRQLKVCATCFDLSVSLLRVLEMTITLVPEIFLDWARPTSEMLLRRLAQLLNQVLNRVTAERNLFDRVVTLRLPGLESVDHYPILVAVTGILVRLLVHGPSSETERATSVLLADPCFQLRSISYLLGQPEPPAPGAALPAPDRKRFSLQSYADYISAEELAQVEQMLAHLTSASAQAAAASLPTSEEDLCPICYAHPISAVFQPCGHKSCKACIDQHLMNNKDCFFCKATIVSVEDWEKGASASATSSAA.

An N-acetylalanine modification is found at Ala-2. A B30.2/SPRY domain is found at 74–254; the sequence is VDSEDEESQG…VAFNFGSRPL (181 aa). Residues 460-481 form a disordered region; that stretch reads HRSSREGKDSAEDRAEAAEERP. The span at 462–481 shows a compositional bias: basic and acidic residues; sequence SSREGKDSAEDRAEAAEERP. Ser-675 bears the Phosphoserine mark. At Arg-683 the chain carries Asymmetric dimethylarginine. An interaction with NFKB1 region spans residues 968-974; it reads WILVRLW. Zn(2+)-binding residues include Cys-1254, Cys-1257, Cys-1269, His-1271, Cys-1274, Cys-1277, Cys-1288, and Cys-1291. The segment at 1254-1292 adopts an RING-type zinc-finger fold; that stretch reads CPICYAHPISAVFQPCGHKSCKACIDQHLMNNKDCFFCK.

In terms of assembly, component of the KPC complex composed of RNF123/KPC1 and UBAC1/KPC2. Interacts with UBAC1 and CDKN1B via its N-terminal domain. Interacts with RIGI (via N-terminus) and IFIH1 (via N-terminus). Post-translationally, ubiquitinated, leading to its degradation. Deubiquitinated by USP19, thereby stimulating CDKN1B ubiquitin-dependent degradation.

It is found in the cytoplasm. It carries out the reaction S-ubiquitinyl-[E2 ubiquitin-conjugating enzyme]-L-cysteine + [acceptor protein]-L-lysine = [E2 ubiquitin-conjugating enzyme]-L-cysteine + N(6)-ubiquitinyl-[acceptor protein]-L-lysine.. It participates in protein modification; protein ubiquitination. Functionally, catalytic subunit of the KPC complex that acts as E3 ubiquitin-protein ligase. Promotes the ubiquitination and proteasome-mediated degradation of CDKN1B which is the cyclin-dependent kinase inhibitor at the G0-G1 transition of the cell cycle. Also acts as a key regulator of the NF-kappa-B signaling by promoting maturation of the NFKB1 component of NF-kappa-B. Acts by catalyzing ubiquitination of the NFKB1 p105 precursor, leading to limited proteasomal degradation of NFKB1 p105 and generation of the active NFKB1 p50 subunit. Functions also as an inhibitor of innate antiviral signaling mediated by RIGI and IFIH1 independently of its E3 ligase activity. Interacts with the N-terminal CARD domains of RIGI and IFIH1 and competes with the downstream adapter MAVS. The sequence is that of E3 ubiquitin-protein ligase RNF123 from Oryctolagus cuniculus (Rabbit).